The chain runs to 318 residues: MASQNRILVLGPTGAIGRHVVWASIKAGNPTYALIRKTPGDINKPSLVAAANPESKEELLQSFKAAGVILLEGDMNDHEALVKAIKQVDTVICTFGRLLILDQVKIIKAIKEAGNVKRFFPSEFGLDVDRHDAVDPVRPVFDEKASIRRVVEAEGVPYTYLCCHAFTGYFLRNLAQFDATEPPRDKVIILGDGNVKGAYVTEADVGTYTIRAANDPRTLNKAVHIRLPHNYLTSNEVVSLWEKKIGKTLEKSYISEEKVLKDINVSTFPHNYLLALYHSQQIKGDAVYEIDPAKDAEAYDLYPDVKYTTADEYLDQFV.

Residues 11-17 (GPTGAIG), Arg36, and Lys44 contribute to the NADP(+) site. Lys144 acts as the Proton acceptor in catalysis. Residue Arg148 coordinates NADP(+).

The protein belongs to the NmrA-type oxidoreductase family. Isoflavone reductase subfamily.

The catalysed reaction is (3R)-vestitone + NADP(+) = 2'-hydroxyformononetin + NADPH + 2 H(+). It participates in phytoalexin biosynthesis; pterocarpan phytoalexin biosynthesis. Reduces achiral isoflavones to chiral isoflavanones during the biosynthesis of chiral pterocarpan phytoalexins. The polypeptide is Isoflavone reductase (IFR) (Cicer arietinum (Chickpea)).